The following is a 65-amino-acid chain: Large ribosomal subunit protein uL29 (65 aa).

The protein belongs to the universal ribosomal protein uL29 family.

The chain is Large ribosomal subunit protein uL29 from Delftia acidovorans (strain DSM 14801 / SPH-1).